Here is a 270-residue protein sequence, read N- to C-terminus: Undecaprenyl-diphosphatase 1 (270 aa).

Helical transmembrane passes span 5 to 25 (YYVL…PIPI), 42 to 62 (IEGF…VLLI), 89 to 109 (FFFI…GVLF), 117 to 137 (LKGV…LWII), 192 to 212 (FSFL…ITDI), 220 to 240 (TLFV…YISL), and 250 to 270 (GNLK…LIFL).

This sequence belongs to the UppP family.

It localises to the cell membrane. It carries out the reaction di-trans,octa-cis-undecaprenyl diphosphate + H2O = di-trans,octa-cis-undecaprenyl phosphate + phosphate + H(+). Its function is as follows. Catalyzes the dephosphorylation of undecaprenyl diphosphate (UPP). Confers resistance to bacitracin. The chain is Undecaprenyl-diphosphatase 1 from Bacillus cereus (strain ATCC 14579 / DSM 31 / CCUG 7414 / JCM 2152 / NBRC 15305 / NCIMB 9373 / NCTC 2599 / NRRL B-3711).